The sequence spans 274 residues: Type II restriction enzyme XamI (274 aa).

It carries out the reaction Endonucleolytic cleavage of DNA to give specific double-stranded fragments with terminal 5'-phosphates.. Functionally, a P subtype restriction enzyme that recognizes the double-stranded sequence 5'-GTCGAC-3' and cleaves after G-1. This Xanthomonas campestris pv. amaranthicola protein is Type II restriction enzyme XamI (xamIR).